Here is a 430-residue protein sequence, read N- to C-terminus: Alpha-(1-&gt;3)-arabinofuranosyltransferase (430 aa).

10 helical membrane-spanning segments follow: residues 26-46 (APSTATVLRSVLWPIAILSVI), 114-134 (WYISFNVLAFLIAAYLMLRIF), 136-156 (YTLSSVAAPALVLAMFCTESV), 160-180 (LVFTNINGCMLLGAVLFFRWL), 194-214 (AIGLTLVVKPSLAPLLLLPVL), 218-238 (FYTLITAFGVPLVFNIAAWPL), 276-296 (WLILLLRVVFLLLAVGSLWLL), 307-327 (FWLLTSSGVLLTASFLLLSLG), 352-372 (WPAWLAIYGFMTMDRWLLGHW), and 381-401 (YMKITYGWSLMLVVVFCVLYF).

It belongs to the glycosyltransferase 87 family.

It is found in the cell membrane. The catalysed reaction is Adds an alpha-D-arabinofuranosyl group from trans,octacis-decaprenylphospho-beta-D-arabinofuranose at the 3-O-position of an alpha-(1-&gt;5)-arabinofuranan chain attached to a beta-(1-&gt;5)-galactofuranan chain.. It functions in the pathway cell wall biogenesis; cell wall polysaccharide biosynthesis. Functionally, involved in the biosynthesis of the arabinogalactan (AG) region of the mycolylarabinogalactan-peptidoglycan (mAGP) complex, an essential component of the mycobacterial cell wall. Catalyzes the addition of an arabinofuranosyl (Araf) residue from the sugar donor beta-D-arabinofuranosyl-1-monophosphoryldecaprenol (DPA) on the C-3 of an alpha-(1-&gt;5)-linked Araf from the arabinan backbone of AG. The protein is Alpha-(1-&gt;3)-arabinofuranosyltransferase (aftC) of Mycolicibacterium smegmatis (strain ATCC 700084 / mc(2)155) (Mycobacterium smegmatis).